A 183-amino-acid polypeptide reads, in one-letter code: Putative manganese efflux pump MntP (183 aa).

The next 6 helical transmembrane spans lie at 3–23, 43–63, 66–86, 107–127, 134–154, and 161–181; these read TISV…LSIY, TFGI…ILFI, ISLY…LMML, LIIM…TFSI, FLYT…GFIL, and ILGQ…SINI.

It belongs to the MntP (TC 9.B.29) family.

It localises to the cell inner membrane. In terms of biological role, probably functions as a manganese efflux pump. The sequence is that of Putative manganese efflux pump MntP from Fusobacterium nucleatum subsp. nucleatum (strain ATCC 25586 / DSM 15643 / BCRC 10681 / CIP 101130 / JCM 8532 / KCTC 2640 / LMG 13131 / VPI 4355).